The chain runs to 545 residues: Chaperonin GroEL (545 aa).

Residues 29 to 32, lysine 50, 86 to 90, glycine 413, and aspartate 495 contribute to the ATP site; these read TLGP and DGTTT.

Belongs to the chaperonin (HSP60) family. In terms of assembly, forms a cylinder of 14 subunits composed of two heptameric rings stacked back-to-back. Interacts with the co-chaperonin GroES.

It localises to the cytoplasm. The enzyme catalyses ATP + H2O + a folded polypeptide = ADP + phosphate + an unfolded polypeptide.. In terms of biological role, together with its co-chaperonin GroES, plays an essential role in assisting protein folding. The GroEL-GroES system forms a nano-cage that allows encapsulation of the non-native substrate proteins and provides a physical environment optimized to promote and accelerate protein folding. The sequence is that of Chaperonin GroEL from Borreliella afzelii (strain PKo) (Borrelia afzelii).